Consider the following 900-residue polypeptide: Periodic tryptophan protein 2 (900 aa).

WD repeat units lie at residues 10–47 (GAPYRGGNAVITKNTQLISPVGNRVSVTDLSKNHSVTL), 50–89 (ETSTNICRLASSPDGTFLLAVDEQNRCLFINLPRRVVLHR), 91–129 (TFKDKVGALKFSPNGKFIAVGIGKLVEIWRSPGFRRAVL), 139–178 (NSDDKVVSLEWSLDSDYLLVGSRDLAARLFCVRKLKGVLN), and 185–229 (GHRD…VKMD). Positions 228 to 284 (MDESEDGHSEPPSPVTPDRADEVMVENGGGVGTELKKRKEYDGKGLESDEEGDDDDE) are disordered. The span at 261 to 274 (ELKKRKEYDGKGLE) shows a compositional bias: basic and acidic residues. Ser-275 is modified (phosphoserine). The segment covering 275 to 284 (SDEEGDDDDE) has biased composition (acidic residues). WD repeat units follow at residues 302-341 (QASAKVTACDYHQGLDMVVVGFSNGVFGLYQMPDFICIHL), 344-384 (ISRQ…YILK), 387-426 (GHYFDVNCVTYSPDSQLLATGADDNKVKVWNVMSGTCFIT), 429-468 (EHTNAVTALHFMADNHSLLSASLDGTVRAWDFKRYKNYKT), 472-512 (PTPR…IKDI), 515-554 (GHEAPVHGLMFSPLTQLLASSSWDYTVRLWDVFASKGTVE), 557-596 (RHNHDVLTVAFRPDGKQLASSTLDGQINFWDTIEGVLMYT), and 619-658 (SSGKCFTTLCYSADGGYILAAGTSRYICMYDIADQVLLRR). Residues 684 to 720 (PIDLIDDDNSDEEGGIDKQSRGNLGYDLPGSRPNRGR) are disordered. Residues 687–697 (LIDDDNSDEEG) show a composition bias toward acidic residues. Residues 720–759 (RPIIRTKSLSIAPTGRSFAAATTEGVLIFSIDDTFIFDPT) form a WD 14 repeat.

Belongs to the WD repeat PWP2 family. Component of the ribosomal small subunit (SSU) processome. Interacts with TBP1 in the nucleus. As to expression, expressed constitutively and ubiquitously; observed in seeds, seedlings, roots, leaves, stems, flowers and siliques.

It is found in the nucleus. The protein resides in the nucleolus. Its function is as follows. Involved in nucleolar processing of pre-18S ribosomal RNA. Plays a role early in ribosome biogenesis, especially in the maturation of 5.8S rRNA. Required for guard cell functions. The protein is Periodic tryptophan protein 2 of Arabidopsis thaliana (Mouse-ear cress).